Here is a 65-residue protein sequence, read N- to C-terminus: MKNDHYVFNFYFFRSKITSNHLIRLNTNYLKKTILFISSDIPETIYEKFYLQSFKLFIIYYNINL.

The protein resides in the plastid. It localises to the chloroplast. This is an uncharacterized protein from Guillardia theta (Cryptophyte).